A 477-amino-acid chain; its full sequence is Glycogen synthase (477 aa).

Lys-15 lines the ADP-alpha-D-glucose pocket.

The protein belongs to the glycosyltransferase 1 family. Bacterial/plant glycogen synthase subfamily.

It catalyses the reaction [(1-&gt;4)-alpha-D-glucosyl](n) + ADP-alpha-D-glucose = [(1-&gt;4)-alpha-D-glucosyl](n+1) + ADP + H(+). Its pathway is glycan biosynthesis; glycogen biosynthesis. Its function is as follows. Synthesizes alpha-1,4-glucan chains using ADP-glucose. The chain is Glycogen synthase from Halorhodospira halophila (strain DSM 244 / SL1) (Ectothiorhodospira halophila (strain DSM 244 / SL1)).